The sequence spans 413 residues: Phosphopentomutase (413 aa).

Asp-11, Asp-306, His-311, Asp-347, His-348, and His-359 together coordinate Mn(2+).

This sequence belongs to the phosphopentomutase family. It depends on Mn(2+) as a cofactor.

It localises to the cytoplasm. It catalyses the reaction 2-deoxy-alpha-D-ribose 1-phosphate = 2-deoxy-D-ribose 5-phosphate. The enzyme catalyses alpha-D-ribose 1-phosphate = D-ribose 5-phosphate. The protein operates within carbohydrate degradation; 2-deoxy-D-ribose 1-phosphate degradation; D-glyceraldehyde 3-phosphate and acetaldehyde from 2-deoxy-alpha-D-ribose 1-phosphate: step 1/2. In terms of biological role, isomerase that catalyzes the conversion of deoxy-ribose 1-phosphate (dRib-1-P) and ribose 1-phosphate (Rib-1-P) to deoxy-ribose 5-phosphate (dRib-5-P) and ribose 5-phosphate (Rib-5-P), respectively. This Helicobacter pylori (strain G27) protein is Phosphopentomutase.